A 363-amino-acid polypeptide reads, in one-letter code: GTPase Obg (363 aa).

An Obg domain is found at 1-159 (MKFVDEAFID…KSLKLELKVL (159 aa)). Residues 160 to 341 (ADVGLLGRPN…LVHAIFGHVQ (182 aa)) form the OBG-type G domain. Residues 166–173 (GRPNAGKS), 191–195 (FTTLH), 213–216 (DIPG), 291–294 (NKLD), and 322–324 (SAL) each bind GTP. 2 residues coordinate Mg(2+): S173 and T193. A disordered region spans residues 343–363 (GQRMDNEPPPLDPRFASAGPA).

Belongs to the TRAFAC class OBG-HflX-like GTPase superfamily. OBG GTPase family. As to quaternary structure, monomer. Mg(2+) is required as a cofactor.

The protein localises to the cytoplasm. In terms of biological role, an essential GTPase which binds GTP, GDP and possibly (p)ppGpp with moderate affinity, with high nucleotide exchange rates and a fairly low GTP hydrolysis rate. Plays a role in control of the cell cycle, stress response, ribosome biogenesis and in those bacteria that undergo differentiation, in morphogenesis control. In Verminephrobacter eiseniae (strain EF01-2), this protein is GTPase Obg.